Reading from the N-terminus, the 199-residue chain is Holliday junction branch migration complex subunit RuvA (199 aa).

The segment at 1-63 is domain I; the sequence is MIAYIEGKLA…EDAHTLFGFA (63 aa). The domain II stretch occupies residues 64 to 142; that stretch reads DLMEKEMFLH…KDALLAGSDS (79 aa). Residues 143-151 are flexible linker; it reads KQNFSVSHN. The tract at residues 151–199 is domain III; that stretch reads NSIRSEALTALITLGFTKTVAEKNLDLILKGNSNSFTLEDLIKQALKMS.

It belongs to the RuvA family. Homotetramer. Forms an RuvA(8)-RuvB(12)-Holliday junction (HJ) complex. HJ DNA is sandwiched between 2 RuvA tetramers; dsDNA enters through RuvA and exits via RuvB. An RuvB hexamer assembles on each DNA strand where it exits the tetramer. Each RuvB hexamer is contacted by two RuvA subunits (via domain III) on 2 adjacent RuvB subunits; this complex drives branch migration. In the full resolvosome a probable DNA-RuvA(4)-RuvB(12)-RuvC(2) complex forms which resolves the HJ.

The protein resides in the cytoplasm. In terms of biological role, the RuvA-RuvB-RuvC complex processes Holliday junction (HJ) DNA during genetic recombination and DNA repair, while the RuvA-RuvB complex plays an important role in the rescue of blocked DNA replication forks via replication fork reversal (RFR). RuvA specifically binds to HJ cruciform DNA, conferring on it an open structure. The RuvB hexamer acts as an ATP-dependent pump, pulling dsDNA into and through the RuvAB complex. HJ branch migration allows RuvC to scan DNA until it finds its consensus sequence, where it cleaves and resolves the cruciform DNA. The protein is Holliday junction branch migration complex subunit RuvA of Cytophaga hutchinsonii (strain ATCC 33406 / DSM 1761 / CIP 103989 / NBRC 15051 / NCIMB 9469 / D465).